The chain runs to 203 residues: Superoxide dismutase [Mn/Fe] (203 aa).

Fe(3+) is bound by residues His-27, His-81, Asp-163, and His-167. Positions 27, 81, 163, and 167 each coordinate Mn(2+).

Belongs to the iron/manganese superoxide dismutase family. It depends on Mn(2+) as a cofactor. Fe(3+) is required as a cofactor.

It carries out the reaction 2 superoxide + 2 H(+) = H2O2 + O2. Destroys superoxide anion radicals which are normally produced within the cells and which are toxic to biological systems. Catalyzes the dismutation of superoxide anion radicals into O2 and H2O2 by successive reduction and oxidation of the transition metal ion at the active site. This is Superoxide dismutase [Mn/Fe] (sodA) from Streptococcus mutans serotype c (strain ATCC 700610 / UA159).